The primary structure comprises 490 residues: Glutamate--tRNA ligase (490 aa).

Positions 13-23 match the 'HIGH' region motif; that stretch reads PSPTGTPHVGL. The short motif at 257 to 261 is the 'KMSKS' region element; it reads KLSKR. Position 260 (K260) interacts with ATP.

The protein belongs to the class-I aminoacyl-tRNA synthetase family. Glutamate--tRNA ligase type 1 subfamily. As to quaternary structure, monomer.

The protein localises to the cytoplasm. The catalysed reaction is tRNA(Glu) + L-glutamate + ATP = L-glutamyl-tRNA(Glu) + AMP + diphosphate. Catalyzes the attachment of glutamate to tRNA(Glu) in a two-step reaction: glutamate is first activated by ATP to form Glu-AMP and then transferred to the acceptor end of tRNA(Glu). The polypeptide is Glutamate--tRNA ligase (Mycobacterium bovis (strain BCG / Pasteur 1173P2)).